A 197-amino-acid chain; its full sequence is Putative AgrB-like protein (197 aa).

A run of 4 helical transmembrane segments spans residues 29 to 49, 79 to 99, 102 to 122, and 143 to 163; these read FGFT…AVGL, SIGC…VPFA, YAWI…APYY, and ILIV…LVLG.

This sequence belongs to the AgrB family.

It is found in the cell membrane. Functionally, may be involved in the proteolytic processing of a quorum sensing system signal molecule precursor. The chain is Putative AgrB-like protein from Halalkalibacterium halodurans (strain ATCC BAA-125 / DSM 18197 / FERM 7344 / JCM 9153 / C-125) (Bacillus halodurans).